Reading from the N-terminus, the 347-residue chain is D-alanine--D-alanine ligase (347 aa).

In terms of domain architecture, ATP-grasp spans 134-332 (KLYAKDLGVK…LAQSLPKTPK (199 aa)). 161-216 (LIGFNFPFIIKPSNAGSSLGVSVVKEEKELIYALDGAFEYSKEILIEPFIQGVKEY) is a binding site for ATP. Positions 288, 300, and 302 each coordinate Mg(2+).

The protein belongs to the D-alanine--D-alanine ligase family. The cofactor is Mg(2+). It depends on Mn(2+) as a cofactor.

It is found in the cytoplasm. It carries out the reaction 2 D-alanine + ATP = D-alanyl-D-alanine + ADP + phosphate + H(+). Its pathway is cell wall biogenesis; peptidoglycan biosynthesis. Functionally, cell wall formation. This Helicobacter pylori (strain Shi470) protein is D-alanine--D-alanine ligase.